The primary structure comprises 255 residues: Hemin import ATP-binding protein HmuV (255 aa).

The ABC transporter domain occupies 2–238; that stretch reads LDVEGLHLKR…AALNAVFGID (237 aa). 34-41 is a binding site for ATP; the sequence is GPNGAGKS.

Belongs to the ABC transporter superfamily. Heme (hemin) importer (TC 3.A.1.14.5) family. The complex is composed of two ATP-binding proteins (HmuV), two transmembrane proteins (HmuU) and a solute-binding protein (HmuT).

The protein localises to the cell inner membrane. Functionally, part of the ABC transporter complex HmuTUV involved in hemin import. Responsible for energy coupling to the transport system. In Pseudomonas entomophila (strain L48), this protein is Hemin import ATP-binding protein HmuV.